The following is a 326-amino-acid chain: Porphobilinogen deaminase (326 aa).

C251 is modified (S-(dipyrrolylmethanemethyl)cysteine).

Belongs to the HMBS family. The cofactor is dipyrromethane.

It carries out the reaction 4 porphobilinogen + H2O = hydroxymethylbilane + 4 NH4(+). It participates in porphyrin-containing compound metabolism; protoporphyrin-IX biosynthesis; coproporphyrinogen-III from 5-aminolevulinate: step 2/4. Tetrapolymerization of the monopyrrole PBG into the hydroxymethylbilane pre-uroporphyrinogen in several discrete steps. This Eremothecium gossypii (strain ATCC 10895 / CBS 109.51 / FGSC 9923 / NRRL Y-1056) (Yeast) protein is Porphobilinogen deaminase (HEM3).